The following is a 354-amino-acid chain: Thiamine thiazole synthase 2, chloroplastic (354 aa).

The N-terminal 44 residues, 1-44 (MATTAASSLLKSSFAGSRLPSATRTTTPSSVAVATPRAGGGPIR), are a transit peptide targeting the chloroplast. A disordered region spans residues 17-49 (SRLPSATRTTTPSSVAVATPRAGGGPIRASISS). Over residues 20 to 32 (PSATRTTTPSSVA) the composition is skewed to polar residues. Substrate is bound by residues A97, 117–118 (EQ), G125, and V190. 2,3-didehydroalanine (Cys) is present on C219. Substrate-binding positions include D221, H236, M288, and 298-300 (RMG).

Belongs to the THI4 family. Homooctamer. The cofactor is Fe cation. In terms of processing, during the catalytic reaction, a sulfide is transferred from Cys-219 to a reaction intermediate, generating a dehydroalanine residue. As to expression, highest expression in developing embryos and green leaves and a very low level expression seen in endosperm, roots, etiolated shoots and immature ears.

It is found in the plastid. The protein localises to the chloroplast. The enzyme catalyses [ADP-thiazole synthase]-L-cysteine + glycine + NAD(+) = [ADP-thiazole synthase]-dehydroalanine + ADP-5-ethyl-4-methylthiazole-2-carboxylate + nicotinamide + 3 H2O + 2 H(+). In terms of biological role, involved in biosynthesis of the thiamine precursor thiazole. Catalyzes the conversion of NAD and glycine to adenosine diphosphate 5-(2-hydroxyethyl)-4-methylthiazole-2-carboxylic acid (ADT), an adenylated thiazole intermediate. The reaction includes an iron-dependent sulfide transfer from a conserved cysteine residue of the protein to a thiazole intermediate. The enzyme can only undergo a single turnover, which suggests it is a suicide enzyme. May have additional roles in adaptation to various stress conditions and in DNA damage tolerance. This Zea mays (Maize) protein is Thiamine thiazole synthase 2, chloroplastic.